Here is a 384-residue protein sequence, read N- to C-terminus: S-adenosylmethionine synthase (384 aa).

His-16 is a binding site for ATP. Residue Asp-18 participates in Mg(2+) binding. K(+) is bound at residue Glu-44. The L-methionine site is built by Glu-57 and Gln-100. Residues 100–110 (QSADIAMGVDE) form a flexible loop region. ATP is bound by residues 165–167 (DAK), Asp-240, 246–247 (RK), Ala-263, and Lys-267. L-methionine is bound at residue Asp-240. Position 271 (Lys-271) interacts with L-methionine.

It belongs to the AdoMet synthase family. In terms of assembly, homotetramer; dimer of dimers. Requires Mg(2+) as cofactor. K(+) serves as cofactor.

Its subcellular location is the cytoplasm. It catalyses the reaction L-methionine + ATP + H2O = S-adenosyl-L-methionine + phosphate + diphosphate. The protein operates within amino-acid biosynthesis; S-adenosyl-L-methionine biosynthesis; S-adenosyl-L-methionine from L-methionine: step 1/1. Catalyzes the formation of S-adenosylmethionine (AdoMet) from methionine and ATP. The overall synthetic reaction is composed of two sequential steps, AdoMet formation and the subsequent tripolyphosphate hydrolysis which occurs prior to release of AdoMet from the enzyme. The protein is S-adenosylmethionine synthase of Teredinibacter turnerae (strain ATCC 39867 / T7901).